Here is a 176-residue protein sequence, read N- to C-terminus: ATP-dependent protease subunit HslV (176 aa).

The active site involves Thr2. 3 residues coordinate Na(+): Gly157, Cys160, and Thr163.

The protein belongs to the peptidase T1B family. HslV subfamily. In terms of assembly, a double ring-shaped homohexamer of HslV is capped on each side by a ring-shaped HslU homohexamer. The assembly of the HslU/HslV complex is dependent on binding of ATP.

The protein localises to the cytoplasm. It carries out the reaction ATP-dependent cleavage of peptide bonds with broad specificity.. Its activity is regulated as follows. Allosterically activated by HslU binding. Protease subunit of a proteasome-like degradation complex believed to be a general protein degrading machinery. The sequence is that of ATP-dependent protease subunit HslV from Salmonella gallinarum (strain 287/91 / NCTC 13346).